The primary structure comprises 271 residues: Formamidopyrimidine-DNA glycosylase (271 aa).

Proline 2 functions as the Schiff-base intermediate with DNA in the catalytic mechanism. Catalysis depends on glutamate 3, which acts as the Proton donor. Lysine 58 (proton donor; for beta-elimination activity) is an active-site residue. 3 residues coordinate DNA: histidine 91, arginine 110, and arginine 152. The FPG-type zinc finger occupies 237-271; sequence RVYDRAGQPCRVCGEPIRCVRLGQRATYYCPRCQR. Arginine 261 functions as the Proton donor; for delta-elimination activity in the catalytic mechanism.

This sequence belongs to the FPG family. As to quaternary structure, monomer. The cofactor is Zn(2+).

It catalyses the reaction Hydrolysis of DNA containing ring-opened 7-methylguanine residues, releasing 2,6-diamino-4-hydroxy-5-(N-methyl)formamidopyrimidine.. The enzyme catalyses 2'-deoxyribonucleotide-(2'-deoxyribose 5'-phosphate)-2'-deoxyribonucleotide-DNA = a 3'-end 2'-deoxyribonucleotide-(2,3-dehydro-2,3-deoxyribose 5'-phosphate)-DNA + a 5'-end 5'-phospho-2'-deoxyribonucleoside-DNA + H(+). Involved in base excision repair of DNA damaged by oxidation or by mutagenic agents. Acts as a DNA glycosylase that recognizes and removes damaged bases. Has a preference for oxidized purines, such as 7,8-dihydro-8-oxoguanine (8-oxoG). Has AP (apurinic/apyrimidinic) lyase activity and introduces nicks in the DNA strand. Cleaves the DNA backbone by beta-delta elimination to generate a single-strand break at the site of the removed base with both 3'- and 5'-phosphates. In Methylococcus capsulatus (strain ATCC 33009 / NCIMB 11132 / Bath), this protein is Formamidopyrimidine-DNA glycosylase.